The primary structure comprises 366 residues: Ribosomal RNA large subunit methyltransferase M (366 aa).

S-adenosyl-L-methionine is bound by residues Ser188, 221–224 (CPGG), Asp240, Asp260, and Asp277. The active-site Proton acceptor is Lys306.

The protein belongs to the class I-like SAM-binding methyltransferase superfamily. RNA methyltransferase RlmE family. RlmM subfamily. As to quaternary structure, monomer.

Its subcellular location is the cytoplasm. It carries out the reaction cytidine(2498) in 23S rRNA + S-adenosyl-L-methionine = 2'-O-methylcytidine(2498) in 23S rRNA + S-adenosyl-L-homocysteine + H(+). Functionally, catalyzes the 2'-O-methylation at nucleotide C2498 in 23S rRNA. This chain is Ribosomal RNA large subunit methyltransferase M, found in Pectobacterium atrosepticum (strain SCRI 1043 / ATCC BAA-672) (Erwinia carotovora subsp. atroseptica).